A 357-amino-acid chain; its full sequence is Isopentenyl-diphosphate delta-isomerase (357 aa).

Residue R12–K13 coordinates substrate. FMN contacts are provided by residues S70, S71–T73, S101, and N130. S101 to R103 is a substrate binding site. Q165 lines the substrate pocket. Residue E166 coordinates Mg(2+). FMN contacts are provided by residues K197, G289–R291, and A310–Q311.

The protein belongs to the IPP isomerase type 2 family. In terms of assembly, homooctamer. Dimer of tetramers. FMN is required as a cofactor. The cofactor is NADPH. It depends on Mg(2+) as a cofactor.

It localises to the cytoplasm. It carries out the reaction isopentenyl diphosphate = dimethylallyl diphosphate. Its function is as follows. Involved in the biosynthesis of isoprenoids. Catalyzes the 1,3-allylic rearrangement of the homoallylic substrate isopentenyl (IPP) to its allylic isomer, dimethylallyl diphosphate (DMAPP). This Chlorobaculum parvum (strain DSM 263 / NCIMB 8327) (Chlorobium vibrioforme subsp. thiosulfatophilum) protein is Isopentenyl-diphosphate delta-isomerase.